The sequence spans 259 residues: MINPIAFKLGPLSLHWYAVCILVGLLLAVYLAAKEAPRKKMTSDDIIDFILIAFPLAIIGARIYYVAFEWSYYSQHLSDIFAIWNGGIAIYGGLITGTIVLFVYCYYKVLNPIHFLDIAAPSVMLAQAIGRWGNFFNQEAYGRAVSQLNYLPSFIRQQMFIDGSYRVPTFLYESMWNLIGFVIIMVWRRKPRSLVDGDIISFYLIWYGCGRLVIEGMRTDSLMLLGIRVSQYMSVLLIIIAIVFIFKRHRQKGISYYQE.

The next 4 membrane-spanning stretches (helical) occupy residues 12–32 (LSLH…VYLA), 46–66 (IIDF…IYYV), 83–103 (IWNG…VLFV), and 109–129 (VLNP…AQAI). Arg131 is an a 1,2-diacyl-sn-glycero-3-phospho-(1'-sn-glycerol) binding site. Transmembrane regions (helical) follow at residues 167 to 187 (VPTF…IMVW), 194 to 214 (LVDG…RLVI), and 226 to 246 (GIRV…VFIF).

This sequence belongs to the Lgt family.

Its subcellular location is the cell membrane. The enzyme catalyses L-cysteinyl-[prolipoprotein] + a 1,2-diacyl-sn-glycero-3-phospho-(1'-sn-glycerol) = an S-1,2-diacyl-sn-glyceryl-L-cysteinyl-[prolipoprotein] + sn-glycerol 1-phosphate + H(+). It functions in the pathway protein modification; lipoprotein biosynthesis (diacylglyceryl transfer). Its function is as follows. Catalyzes the transfer of the diacylglyceryl group from phosphatidylglycerol to the sulfhydryl group of the N-terminal cysteine of a prolipoprotein, the first step in the formation of mature lipoproteins. This Streptococcus equi subsp. equi (strain 4047) protein is Phosphatidylglycerol--prolipoprotein diacylglyceryl transferase.